The primary structure comprises 384 residues: Glucose-1-phosphate adenylyltransferase (384 aa).

Alpha-D-glucose 1-phosphate-binding positions include Y103, G168, 183-184, and S194; that span reads EK.

The protein belongs to the bacterial/plant glucose-1-phosphate adenylyltransferase family. Homotetramer.

The enzyme catalyses alpha-D-glucose 1-phosphate + ATP + H(+) = ADP-alpha-D-glucose + diphosphate. The protein operates within glycan biosynthesis; glycogen biosynthesis. In terms of biological role, involved in the biosynthesis of ADP-glucose, a building block required for the elongation reactions to produce glycogen. Catalyzes the reaction between ATP and alpha-D-glucose 1-phosphate (G1P) to produce pyrophosphate and ADP-Glc. The chain is Glucose-1-phosphate adenylyltransferase from Fusobacterium nucleatum subsp. nucleatum (strain ATCC 25586 / DSM 15643 / BCRC 10681 / CIP 101130 / JCM 8532 / KCTC 2640 / LMG 13131 / VPI 4355).